The sequence spans 186 residues: MTNTFLLAAEKLPMEESVNPLIPPLYDIVWSIIPFAVILFVFWKFVLPKFQEVLNQREDQIEGGIRRAESAQAEAKAALEKYNAQLAEARTEAAQIRDDARSQGQKIIADMKAQATEESNRIVESGHKQLEAQRSAVVTDLRKEMGENSINLAERLLGEQLSDDVKRSGTIDNFLAGLDNVGASGK.

Residues 28–48 form a helical membrane-spanning segment; it reads IVWSIIPFAVILFVFWKFVLP.

It belongs to the ATPase B chain family. F-type ATPases have 2 components, F(1) - the catalytic core - and F(0) - the membrane proton channel. F(1) has five subunits: alpha(3), beta(3), gamma(1), delta(1), epsilon(1). F(0) has three main subunits: a(1), b(2) and c(10-14). The alpha and beta chains form an alternating ring which encloses part of the gamma chain. F(1) is attached to F(0) by a central stalk formed by the gamma and epsilon chains, while a peripheral stalk is formed by the delta and b chains.

The protein resides in the cell membrane. Its function is as follows. F(1)F(0) ATP synthase produces ATP from ADP in the presence of a proton or sodium gradient. F-type ATPases consist of two structural domains, F(1) containing the extramembraneous catalytic core and F(0) containing the membrane proton channel, linked together by a central stalk and a peripheral stalk. During catalysis, ATP synthesis in the catalytic domain of F(1) is coupled via a rotary mechanism of the central stalk subunits to proton translocation. Component of the F(0) channel, it forms part of the peripheral stalk, linking F(1) to F(0). The polypeptide is ATP synthase subunit b (Corynebacterium jeikeium (strain K411)).